Reading from the N-terminus, the 526-residue chain is MSLVEAISLWNEGVLAADKKDWKGALDAFSAVQDPHSRICFNIGCMYTILKNMTEAEKAFTRSINRDKHLAVAYFQRGMLYYQTEKYDLAIKDLKEALIQLRGNQLIDYKILGLQFKLFACEVLYNIAFMYAKKEEWKKAEEQLALATSMKSEPRHSKIDKAMECVWKQKLYEPVVIPVGKLFRPNERQVAQLAKKDYLGKATVVASVVDQDSFSGFAPLQPQAAEPPPRPKTPEIFRALEGEAHRVLFGFVPETKEELQVMPGNIVFVLKKGNDNWATVMFNGQKGLVPCNYLEPVELRIHPQQQPQEESSPQSDIPAPPSSKAPGRPQLSPGQKQKEEPKEVKLSVPMPYTLKVHYKYTVVMKTQPGLPYSQVRDMVSKKLELRLEHTKLSYRPRDSNELVPLSEDSMKDAWGQVKNYCLTLWCENTVGDQGFPDEPKESEKADANNQTTEPQLKKGSQVEALFSYEATQPEDLEFQEGDIILVLSKVNEEWLEGECKGKVGIFPKVFVEDCATTDLESTRREV.

TPR repeat units lie at residues 37 to 70 (SRIC…DKHL), 71 to 104 (AVAY…LRGN), and 121 to 154 (CEVL…KSEP). Threonine 233 is subject to Phosphothreonine. In terms of domain architecture, SH3 1 spans 240–299 (LEGEAHRVLFGFVPETKEELQVMPGNIVFVLKKGNDNWATVMFNGQKGLVPCNYLEPVEL). Low complexity predominate over residues 303-315 (PQQQPQEESSPQS). Residues 303–346 (PQQQPQEESSPQSDIPAPPSSKAPGRPQLSPGQKQKEEPKEVKL) are disordered. The segment covering 336-345 (KQKEEPKEVK) has biased composition (basic and acidic residues). The 79-residue stretch at 351 to 429 (PYTLKVHYKY…YCLTLWCENT (79 aa)) folds into the PB1 domain. A Phosphoserine modification is found at serine 399. Positions 433–458 (QGFPDEPKESEKADANNQTTEPQLKK) are disordered. Positions 437–446 (DEPKESEKAD) are enriched in basic and acidic residues. The region spanning 457–516 (KKGSQVEALFSYEATQPEDLEFQEGDIILVLSKVNEEWLEGECKGKVGIFPKVFVEDCAT) is the SH3 2 domain.

Belongs to the NCF2/NOXA1 family. As to quaternary structure, component of the phagocyte NADPH oxidase complex composed of an obligatory core heterodimer formed by the membrane proteins CYBA and CYBB and the cytosolic regulatory subunits NCF1/p47-phox, NCF2/p67-phox, NCF4/p40-phox and the small GTPase RAC1 or RAC2. Part of a cytosolic complex composed at least by NCF1, NCF2 and NCF4. Interacts with NCF4. Interacts (via the C-terminal SH3 domain) with NCF1 (via C-terminus). Interacts with SYTL1 and RAC1. May interact with NOXO1. Interacts with S100A8 and calprotectin (S100A8/9). Interacts with GBP7 (via GB1/RHD3-type G domain). Interacts with CYBB; the interaction is enhanced in the presence of GBP7.

Its subcellular location is the cytoplasm. Functionally, subunit of the phagocyte NADPH oxidase complex that mediates the transfer of electrons from cytosolic NADPH to O2 to produce the superoxide anion (O2(-)). In the activated complex, electrons are first transferred from NADPH to flavin adenine dinucleotide (FAD) and subsequently transferred via two heme molecules to molecular oxygen, producing superoxide through an outer-sphere reaction. Activation of the NADPH oxidase complex is initiated by the assembly of cytosolic subunits of the NADPH oxidase complex with the core NADPH oxidase complex to form a complex at the plasma membrane or phagosomal membrane. This activation process is initiated by phosphorylation dependent binding of the cytosolic NCF1/p47-phox subunit to the C-terminus of CYBA/p22-phox. This chain is Neutrophil cytosol factor 2, found in Homo sapiens (Human).